Consider the following 598-residue polypeptide: Phenylalanine--tRNA ligase beta subunit, cytoplasmic (598 aa).

The region spanning 303–383 is the B5 domain; the sequence is LAVYDMEVPL…IAYGFNNIPT (81 aa). Residues Asp361, Asp367, Glu370, and Asp371 each contribute to the Mg(2+) site.

Belongs to the phenylalanyl-tRNA synthetase beta subunit family. Type 2 subfamily. In terms of assembly, tetramer of two alpha and two beta subunits. Mg(2+) is required as a cofactor.

The protein localises to the cytoplasm. The protein resides in the cytosol. The catalysed reaction is tRNA(Phe) + L-phenylalanine + ATP = L-phenylalanyl-tRNA(Phe) + AMP + diphosphate + H(+). This chain is Phenylalanine--tRNA ligase beta subunit, cytoplasmic, found in Arabidopsis thaliana (Mouse-ear cress).